A 47-amino-acid polypeptide reads, in one-letter code: MPREHDKQSKFAPSHLGTKPVEYKRNKGKKMHDKSGETPIIMQTKGE.

A disordered region spans residues 1 to 47 (MPREHDKQSKFAPSHLGTKPVEYKRNKGKKMHDKSGETPIIMQTKGE).

Belongs to the SspN family.

The protein resides in the spore core. This Bacillus licheniformis (strain ATCC 14580 / DSM 13 / JCM 2505 / CCUG 7422 / NBRC 12200 / NCIMB 9375 / NCTC 10341 / NRRL NRS-1264 / Gibson 46) protein is Small, acid-soluble spore protein N.